Consider the following 338-residue polypeptide: Ketol-acid reductoisomerase (NADP(+)) (338 aa).

In terms of domain architecture, KARI N-terminal Rossmann spans 1–181 (MKVFYDKDAD…GGGRAGIIET (181 aa)). NADP(+)-binding positions include 24-27 (YGSQ), arginine 47, and serine 52. Residue histidine 107 is part of the active site. An NADP(+)-binding site is contributed by glycine 133. The region spanning 182-327 (NFREETETDL…AKLRAMMPWI (146 aa)) is the KARI C-terminal knotted domain. Residues aspartate 190, glutamate 194, glutamate 226, and glutamate 230 each contribute to the Mg(2+) site. Serine 251 provides a ligand contact to substrate.

This sequence belongs to the ketol-acid reductoisomerase family. The cofactor is Mg(2+).

It carries out the reaction (2R)-2,3-dihydroxy-3-methylbutanoate + NADP(+) = (2S)-2-acetolactate + NADPH + H(+). The catalysed reaction is (2R,3R)-2,3-dihydroxy-3-methylpentanoate + NADP(+) = (S)-2-ethyl-2-hydroxy-3-oxobutanoate + NADPH + H(+). It functions in the pathway amino-acid biosynthesis; L-isoleucine biosynthesis; L-isoleucine from 2-oxobutanoate: step 2/4. The protein operates within amino-acid biosynthesis; L-valine biosynthesis; L-valine from pyruvate: step 2/4. Involved in the biosynthesis of branched-chain amino acids (BCAA). Catalyzes an alkyl-migration followed by a ketol-acid reduction of (S)-2-acetolactate (S2AL) to yield (R)-2,3-dihydroxy-isovalerate. In the isomerase reaction, S2AL is rearranged via a Mg-dependent methyl migration to produce 3-hydroxy-3-methyl-2-ketobutyrate (HMKB). In the reductase reaction, this 2-ketoacid undergoes a metal-dependent reduction by NADPH to yield (R)-2,3-dihydroxy-isovalerate. In Ralstonia nicotianae (strain ATCC BAA-1114 / GMI1000) (Ralstonia solanacearum), this protein is Ketol-acid reductoisomerase (NADP(+)).